A 288-amino-acid polypeptide reads, in one-letter code: Plasmodesmata-located protein 6 (288 aa).

The first 22 residues, 1 to 22, serve as a signal peptide directing secretion; it reads MFATKTVLFIAVVSLLGTFSSA. Over 23–256 the chain is Extracellular; that stretch reads AVDTFIYGGC…NNDDDEIEKT (234 aa). 2 consecutive Gnk2-homologous domains span residues 25 to 132 and 137 to 234; these read DTFI…NTTF and DKTV…ARGG. Disulfide bonds link Cys32-Cys110, Cys84-Cys95, Cys98-Cys123, Cys145-Cys212, Cys188-Cys197, and Cys200-Cys225. A helical transmembrane segment spans residues 257–277; that stretch reads LAIIVGLIAGVTLLVVFLSFM. Residues 257–277 form a necessary and sufficient for plasmodesmal targeting region; sequence LAIIVGLIAGVTLLVVFLSFM. Residues 278 to 288 lie on the Cytoplasmic side of the membrane; sequence AKSCERGKGGK.

It belongs to the cysteine-rich repeat secretory protein family. Plasmodesmata-located proteins (PDLD) subfamily. In terms of assembly, (Microbial infection) Interacts with Grapevine fanleaf virus (GFLV) 2B-MP. As to expression, highly expressed in inflorescence silique (at mRNA level).

It is found in the cell membrane. The protein resides in the cell junction. Its subcellular location is the plasmodesma. Its function is as follows. Modulates cell-to-cell trafficking. This chain is Plasmodesmata-located protein 6, found in Arabidopsis thaliana (Mouse-ear cress).